The following is a 200-amino-acid chain: 3-isopropylmalate dehydratase small subunit (200 aa).

Belongs to the LeuD family. LeuD type 1 subfamily. Heterodimer of LeuC and LeuD.

It catalyses the reaction (2R,3S)-3-isopropylmalate = (2S)-2-isopropylmalate. It functions in the pathway amino-acid biosynthesis; L-leucine biosynthesis; L-leucine from 3-methyl-2-oxobutanoate: step 2/4. Catalyzes the isomerization between 2-isopropylmalate and 3-isopropylmalate, via the formation of 2-isopropylmaleate. The chain is 3-isopropylmalate dehydratase small subunit from Vibrio atlanticus (strain LGP32) (Vibrio splendidus (strain Mel32)).